Consider the following 267-residue polypeptide: 4-hydroxy-tetrahydrodipicolinate reductase (267 aa).

Residue glycine 11 to methionine 16 coordinates NAD(+). Arginine 39 is an NADP(+) binding site. NAD(+) is bound by residues glycine 100–threonine 102 and alanine 126–phenylalanine 129. The active-site Proton donor/acceptor is the histidine 156. A (S)-2,3,4,5-tetrahydrodipicolinate-binding site is contributed by histidine 157. Lysine 160 serves as the catalytic Proton donor. Glycine 166 to threonine 167 provides a ligand contact to (S)-2,3,4,5-tetrahydrodipicolinate.

Belongs to the DapB family.

It is found in the cytoplasm. It catalyses the reaction (S)-2,3,4,5-tetrahydrodipicolinate + NAD(+) + H2O = (2S,4S)-4-hydroxy-2,3,4,5-tetrahydrodipicolinate + NADH + H(+). It carries out the reaction (S)-2,3,4,5-tetrahydrodipicolinate + NADP(+) + H2O = (2S,4S)-4-hydroxy-2,3,4,5-tetrahydrodipicolinate + NADPH + H(+). Its pathway is amino-acid biosynthesis; L-lysine biosynthesis via DAP pathway; (S)-tetrahydrodipicolinate from L-aspartate: step 4/4. In terms of biological role, catalyzes the conversion of 4-hydroxy-tetrahydrodipicolinate (HTPA) to tetrahydrodipicolinate. The sequence is that of 4-hydroxy-tetrahydrodipicolinate reductase from Moorella thermoacetica (strain ATCC 39073 / JCM 9320).